A 423-amino-acid polypeptide reads, in one-letter code: Salicylate 5-hydroxylase, large oxygenase component (423 aa).

A disordered region spans residues 1–20 (MSEPQRLKPVFPQDPKWPGE). A Rieske domain is found at 49–168 (WCYVGLEAEI…VAARGGAVFA (120 aa)). Positions 91, 93, 111, and 114 each coordinate [2Fe-2S] cluster. His-224, His-229, and Asp-370 together coordinate Fe cation.

This sequence belongs to the bacterial ring-hydroxylating dioxygenase alpha subunit family. The salicylate 5-hydroxylase (S5H) multicomponent enzyme system is composed of an electron transfer component and an oxygenase component. The electron transfer component is comprised of a ferredoxin reductase (NagAa) and a ferredoxin (NagAb), and the oxygenase component is formed by a large subunit (NagG) and a small subunit (NagH). Fe cation is required as a cofactor. Requires [2Fe-2S] cluster as cofactor.

It carries out the reaction salicylate + NADH + O2 + H(+) = 2,5-dihydroxybenzoate + NAD(+) + H2O. Its pathway is aromatic compound metabolism; naphthalene degradation. Its function is as follows. Oxygenase component of the salicylate 5-hydroxylase (S5H) multicomponent enzyme system which catalyzes the 5-hydroxylation of salicylate to gentisate. Active only on substrates with a ring-substituted carboxylate group with an adjacent hydroxyl group. Primarily active against salicylate and substituted salicylates, but not against 2-hydroxycinnamate, 3-hydroxycinnamate, 2-hydroxyphenylacetate, 3-hydroxyphenylacetate, 2-hydroxybenzophenone, 1-hydroxy-2-naphthoate, 4-methoxysalicylate or 2-hydroxyacetophenone. The protein is Salicylate 5-hydroxylase, large oxygenase component of Ralstonia sp.